The sequence spans 198 residues: FMN-dependent NADH:quinone oxidoreductase (198 aa).

92-95 (MWNL) contributes to the FMN binding site.

It belongs to the azoreductase type 1 family. In terms of assembly, homodimer. Requires FMN as cofactor.

The catalysed reaction is 2 a quinone + NADH + H(+) = 2 a 1,4-benzosemiquinone + NAD(+). It catalyses the reaction N,N-dimethyl-1,4-phenylenediamine + anthranilate + 2 NAD(+) = 2-(4-dimethylaminophenyl)diazenylbenzoate + 2 NADH + 2 H(+). In terms of biological role, quinone reductase that provides resistance to thiol-specific stress caused by electrophilic quinones. Also exhibits azoreductase activity. Catalyzes the reductive cleavage of the azo bond in aromatic azo compounds to the corresponding amines. This chain is FMN-dependent NADH:quinone oxidoreductase, found in Clostridium beijerinckii (strain ATCC 51743 / NCIMB 8052) (Clostridium acetobutylicum).